The following is a 334-amino-acid chain: Small ribosomal subunit protein uS2 (334 aa).

Belongs to the universal ribosomal protein uS2 family.

The sequence is that of Small ribosomal subunit protein uS2 from Xanthobacter autotrophicus (strain ATCC BAA-1158 / Py2).